A 607-amino-acid polypeptide reads, in one-letter code: Elongation factor 4 (607 aa).

Positions glutamate 11–glutamine 193 constitute a tr-type G domain. GTP contacts are provided by residues aspartate 23 to threonine 28 and asparagine 140 to aspartate 143.

It belongs to the TRAFAC class translation factor GTPase superfamily. Classic translation factor GTPase family. LepA subfamily.

It localises to the cell membrane. It carries out the reaction GTP + H2O = GDP + phosphate + H(+). In terms of biological role, required for accurate and efficient protein synthesis under certain stress conditions. May act as a fidelity factor of the translation reaction, by catalyzing a one-codon backward translocation of tRNAs on improperly translocated ribosomes. Back-translocation proceeds from a post-translocation (POST) complex to a pre-translocation (PRE) complex, thus giving elongation factor G a second chance to translocate the tRNAs correctly. Binds to ribosomes in a GTP-dependent manner. The polypeptide is Elongation factor 4 (Lactococcus lactis subsp. lactis (strain IL1403) (Streptococcus lactis)).